Reading from the N-terminus, the 154-residue chain is Protein X (154 aa).

The tract at residues 68–117 (PCALRFTSARCMETTVNAHQILPKVLYKRTLGLPAMSTTDLEAYFKDCVF) is mitochondrial targeting sequence.

This sequence belongs to the orthohepadnavirus protein X family. May form homodimer. May interact with host CEBPA, CFLAR, CREB1, DDB1, E4F1, HBXIP, HSPD1/HSP60, NFKBIA, POLR2E and SMAD4. Interacts with host SMC5-SMC6 complex and induces its degradation. Interacts with host TRPC4AP; leading to prevent ubiquitination of TRPC4AP. Interacts with host PLSCR1; this interaction promotes ubiquitination and degradation of HBx and impairs HBx-mediated cell proliferation. In terms of processing, a fraction may be phosphorylated in insect cells and HepG2 cells, a human hepatoblastoma cell line. Phosphorylated in vitro by host protein kinase C or mitogen-activated protein kinase. N-acetylated in insect cells.

The protein localises to the host cytoplasm. Its subcellular location is the host nucleus. The protein resides in the host mitochondrion. Its function is as follows. Multifunctional protein that plays a role in silencing host antiviral defenses and promoting viral transcription. Does not seem to be essential for HBV infection. May be directly involved in development of cirrhosis and liver cancer (hepatocellular carcinoma). Most of cytosolic activities involve modulation of cytosolic calcium. The effect on apoptosis is controversial depending on the cell types in which the studies have been conducted. May induce apoptosis by localizing in mitochondria and causing loss of mitochondrial membrane potential. May also modulate apoptosis by binding host CFLAR, a key regulator of the death-inducing signaling complex (DISC). Promotes viral transcription by using the host E3 ubiquitin ligase DDB1 to target the SMC5-SMC6 complex to proteasomal degradation. This host complex would otherwise bind to viral episomal DNA, and prevents its transcription. Moderately stimulates transcription of many different viral and cellular transcription elements. Promoters and enhancers stimulated by HBx contain DNA binding sites for NF-kappa-B, AP-1, AP-2, c-EBP, ATF/CREB, or the calcium-activated factor NF-AT. The sequence is that of Protein X from Homo sapiens (Human).